The following is a 342-amino-acid chain: tRNA N6-adenosine threonylcarbamoyltransferase (342 aa).

Residues His111 and His115 each coordinate Fe cation. Substrate-binding positions include 134–138, Asp167, Gly180, and Asn277; that span reads LVSGG. Position 305 (Asp305) interacts with Fe cation.

This sequence belongs to the KAE1 / TsaD family. Fe(2+) is required as a cofactor.

The protein localises to the cytoplasm. The enzyme catalyses L-threonylcarbamoyladenylate + adenosine(37) in tRNA = N(6)-L-threonylcarbamoyladenosine(37) in tRNA + AMP + H(+). Its function is as follows. Required for the formation of a threonylcarbamoyl group on adenosine at position 37 (t(6)A37) in tRNAs that read codons beginning with adenine. Is involved in the transfer of the threonylcarbamoyl moiety of threonylcarbamoyl-AMP (TC-AMP) to the N6 group of A37, together with TsaE and TsaB. TsaD likely plays a direct catalytic role in this reaction. The chain is tRNA N6-adenosine threonylcarbamoyltransferase from Haemophilus influenzae (strain ATCC 51907 / DSM 11121 / KW20 / Rd).